The chain runs to 270 residues: Glucosamine-6-phosphate deaminase (270 aa).

D72 (proton acceptor; for enolization step) is an active-site residue. D141 serves as the catalytic For ring-opening step. H143 acts as the Proton acceptor; for ring-opening step in catalysis. E148 serves as the catalytic For ring-opening step.

Belongs to the glucosamine/galactosamine-6-phosphate isomerase family. NagB subfamily.

It carries out the reaction alpha-D-glucosamine 6-phosphate + H2O = beta-D-fructose 6-phosphate + NH4(+). Its pathway is amino-sugar metabolism; N-acetylneuraminate degradation; D-fructose 6-phosphate from N-acetylneuraminate: step 5/5. Allosterically activated by N-acetylglucosamine 6-phosphate (GlcNAc6P). Functionally, catalyzes the reversible isomerization-deamination of glucosamine 6-phosphate (GlcN6P) to form fructose 6-phosphate (Fru6P) and ammonium ion. This Treponema denticola (strain ATCC 35405 / DSM 14222 / CIP 103919 / JCM 8153 / KCTC 15104) protein is Glucosamine-6-phosphate deaminase.